Consider the following 1018-residue polypeptide: Calcium-transporting ATPase sarcoplasmic/endoplasmic reticulum type (1018 aa).

Over 1-48 the chain is Cytoplasmic; the sequence is MEDGHSKTVDEVLSHFRVDPERGLSLDQVKEYQKKYGPNELPAEEGKT. The chain crosses the membrane as a helical span at residues 49–69; that stretch reads LWQLVLEQFDDLLVKILLLAA. Topologically, residues 70-88 are lumenal; sequence IISFVLALFEEHEGVEAFV. The chain crosses the membrane as a helical span at residues 89–109; that stretch reads EPFVILLILIANAVVGVWQER. Topologically, residues 110–252 are cytoplasmic; that stretch reads NAESAIEALK…EIKTPLQQKL (143 aa). The helical transmembrane segment at 253-272 threads the bilayer; the sequence is DEFGEQLSKVISLICVAVWA. Topologically, residues 273–294 are lumenal; it reads INIGHFNDPAHGGSWIKGAVYY. The chain crosses the membrane as a helical span at residues 295 to 312; that stretch reads FKIAVALAVAAIPEGLPA. Ca(2+) is bound by residues Val303, Ala304, Ile306, and Glu308. Residues 313–756 are Cytoplasmic-facing; the sequence is VITTCLALGT…EEGRAIYNNM (444 aa). Asp350 acts as the 4-aspartylphosphate intermediate in catalysis. The Mg(2+) site is built by Asp702 and Asp706. The chain crosses the membrane as a helical span at residues 757 to 776; sequence KQFIRYLISSNIGEVVSIFL. Positions 767 and 770 each coordinate Ca(2+). Topologically, residues 777 to 786 are lumenal; sequence TAALGLPEAL. A helical membrane pass occupies residues 787–807; that stretch reads IPVQLLWVNLVTDGLPATALG. Residues Asn795, Thr798, and Asp799 each contribute to the Ca(2+) site. Residues 808–827 are Cytoplasmic-facing; the sequence is FNPPDLDIMTKPPRKADEGL. Residues 828 to 850 traverse the membrane as a helical segment; it reads ISGWLFFRYMAIGGYVGCATVGG. At 851–896 the chain is on the lumenal side; the sequence is AAWWFMFSETGPQLSYWQLTHHLSCLGGGEEFKGIDCKIFNDPHPM. A helical transmembrane segment spans residues 897-916; the sequence is TMALSVLVTIEMLNAMNSLS. Position 907 (Glu907) interacts with Ca(2+). The Cytoplasmic segment spans residues 917-929; sequence ENQSLVQMPPWCN. A helical transmembrane segment spans residues 930-948; it reads IWLIASMCLSFALHFVILY. The Lumenal portion of the chain corresponds to 949-963; sequence VDVLSTVFQVTPLDG. A helical membrane pass occupies residues 964 to 984; that stretch reads NEWMTVMKFSLPVVLLDEILK. The Cytoplasmic portion of the chain corresponds to 985–1018; that stretch reads FVARRISDGESYIKNMHGLVLAWAVFFAYIIWGP.

This sequence belongs to the cation transport ATPase (P-type) (TC 3.A.3) family.

The protein resides in the endoplasmic reticulum membrane. It is found in the sarcoplasmic reticulum membrane. The enzyme catalyses Ca(2+)(in) + ATP + H2O = Ca(2+)(out) + ADP + phosphate + H(+). Functionally, this magnesium-dependent enzyme catalyzes the hydrolysis of ATP coupled with the transport of calcium. In Anopheles gambiae (African malaria mosquito), this protein is Calcium-transporting ATPase sarcoplasmic/endoplasmic reticulum type.